The chain runs to 396 residues: Probable glucan endo-1,6-beta-glucosidase B (396 aa).

A signal peptide spans Met-1–Ala-17. Asn-30 carries N-linked (GlcNAc...) asparagine glycosylation. Glu-219 acts as the Proton donor in catalysis. Asn-272 carries N-linked (GlcNAc...) asparagine glycosylation. Glu-320 functions as the Nucleophile in the catalytic mechanism.

The protein belongs to the glycosyl hydrolase 5 (cellulase A) family.

Its subcellular location is the secreted. It carries out the reaction Random hydrolysis of (1-&gt;6)-linkages in (1-&gt;6)-beta-D-glucans.. Functionally, beta-glucanases participate in the metabolism of beta-glucan, the main structural component of the cell wall. Acts on lutean, pustulan and 1,6-oligo-beta-D-glucosides. In Aspergillus fumigatus (strain ATCC MYA-4609 / CBS 101355 / FGSC A1100 / Af293) (Neosartorya fumigata), this protein is Probable glucan endo-1,6-beta-glucosidase B (exgB).